The sequence spans 214 residues: RNA-free ribonuclease P (214 aa).

Belongs to the HARP family.

The enzyme catalyses Endonucleolytic cleavage of RNA, removing 5'-extranucleotides from tRNA precursor.. RNA-free RNase P that catalyzes the removal of the 5'-leader sequence from pre-tRNA to produce the mature 5'-terminus. This is RNA-free ribonuclease P from Aeropyrum pernix (strain ATCC 700893 / DSM 11879 / JCM 9820 / NBRC 100138 / K1).